The sequence spans 408 residues: Tyrosine--tRNA ligase (408 aa).

Positions 46 to 55 (PTAPDLHVGH) match the 'HIGH' region motif. A 'KMSKS' region motif is present at residues 230-234 (KMSKS). ATP is bound at residue Lys-233. The S4 RNA-binding domain occupies 343–404 (VWICRLLTDA…GKRRFARIKF (62 aa)).

This sequence belongs to the class-I aminoacyl-tRNA synthetase family. TyrS type 2 subfamily. In terms of assembly, homodimer.

It is found in the cytoplasm. It catalyses the reaction tRNA(Tyr) + L-tyrosine + ATP = L-tyrosyl-tRNA(Tyr) + AMP + diphosphate + H(+). Its function is as follows. Catalyzes the attachment of tyrosine to tRNA(Tyr) in a two-step reaction: tyrosine is first activated by ATP to form Tyr-AMP and then transferred to the acceptor end of tRNA(Tyr). The polypeptide is Tyrosine--tRNA ligase (Syntrophotalea carbinolica (strain DSM 2380 / NBRC 103641 / GraBd1) (Pelobacter carbinolicus)).